We begin with the raw amino-acid sequence, 172 residues long: Photosystem I assembly protein Ycf3 (172 aa).

TPR repeat units follow at residues 35 to 70, 74 to 107, and 122 to 155; these read AFTY…EIDP, SYIL…NPFL, and GERA…TPGN.

The protein belongs to the Ycf3 family.

The protein localises to the plastid. It localises to the chloroplast thylakoid membrane. Functionally, essential for the assembly of the photosystem I (PSI) complex. May act as a chaperone-like factor to guide the assembly of the PSI subunits. This is Photosystem I assembly protein Ycf3 from Dioscorea elephantipes (Elephant's foot yam).